A 346-amino-acid chain; its full sequence is Hydroxymethylglutaryl-CoA synthase (346 aa).

Asp28 is a (3S)-3-hydroxy-3-methylglutaryl-CoA binding site. The Proton donor/acceptor role is filled by Glu80. Cys112 and Thr153 together coordinate (3S)-3-hydroxy-3-methylglutaryl-CoA. Cys112 serves as the catalytic Acyl-thioester intermediate. Arg199 contacts CoA. The (3S)-3-hydroxy-3-methylglutaryl-CoA site is built by Thr201 and His234. Residue His234 is the Proton donor/acceptor of the active site. Lys239 contacts CoA. Arg243, Asn266, and Ser296 together coordinate (3S)-3-hydroxy-3-methylglutaryl-CoA.

Belongs to the thiolase-like superfamily. Archaeal HMG-CoA synthase family. Interacts with acetoacetyl-CoA thiolase that catalyzes the precedent step in the pathway and with a DUF35 protein. The acetoacetyl-CoA thiolase/HMG-CoA synthase complex channels the intermediate via a fused CoA-binding site, which allows for efficient coupling of the endergonic thiolase reaction with the exergonic HMGCS reaction.

The catalysed reaction is acetoacetyl-CoA + acetyl-CoA + H2O = (3S)-3-hydroxy-3-methylglutaryl-CoA + CoA + H(+). Its pathway is metabolic intermediate biosynthesis; (R)-mevalonate biosynthesis; (R)-mevalonate from acetyl-CoA: step 2/3. Its function is as follows. Catalyzes the condensation of acetyl-CoA with acetoacetyl-CoA to form 3-hydroxy-3-methylglutaryl-CoA (HMG-CoA). Functions in the mevalonate (MVA) pathway leading to isopentenyl diphosphate (IPP), a key precursor for the biosynthesis of isoprenoid compounds that are building blocks of archaeal membrane lipids. This is Hydroxymethylglutaryl-CoA synthase from Methanosphaera stadtmanae (strain ATCC 43021 / DSM 3091 / JCM 11832 / MCB-3).